Consider the following 457-residue polypeptide: Chromosomal replication initiator protein DnaA (457 aa).

Residues 1–75 (MDAQLNNLWE…ALKIVTSRKF (75 aa)) form a domain I, interacts with DnaA modulators region. Residues 75-118 (FKIEFYLESDLEEEKENEEKQKEEKKDNTNDVDGSIVVSDEMSA) are domain II. The segment at 87-108 (EEKENEEKQKEEKKDNTNDVDG) is disordered. Over residues 91–103 (NEEKQKEEKKDNT) the composition is skewed to basic and acidic residues. The domain III, AAA+ region stretch occupies residues 119-335 (TLNPKYTFQS…GALIRIIAYS (217 aa)). ATP-binding residues include glycine 163, glycine 165, lysine 166, and threonine 167. The domain IV, binds dsDNA stretch occupies residues 336 to 457 (SLTNRDVSVD…NDITKKLTQK (122 aa)).

Belongs to the DnaA family. Oligomerizes as a right-handed, spiral filament on DNA at oriC.

The protein resides in the cytoplasm. Functionally, plays an essential role in the initiation and regulation of chromosomal replication. ATP-DnaA binds to the origin of replication (oriC) to initiate formation of the DNA replication initiation complex once per cell cycle. Binds the DnaA box (a 9 base pair repeat at the origin) and separates the double-stranded (ds)DNA. Forms a right-handed helical filament on oriC DNA; dsDNA binds to the exterior of the filament while single-stranded (ss)DNA is stabiized in the filament's interior. The ATP-DnaA-oriC complex binds and stabilizes one strand of the AT-rich DNA unwinding element (DUE), permitting loading of DNA polymerase. After initiation quickly degrades to an ADP-DnaA complex that is not apt for DNA replication. Binds acidic phospholipids. The chain is Chromosomal replication initiator protein DnaA from Clostridium perfringens (strain SM101 / Type A).